Here is a 428-residue protein sequence, read N- to C-terminus: 3-phosphoshikimate 1-carboxyvinyltransferase (428 aa).

Lys22, Ser23, and Arg27 together coordinate 3-phosphoshikimate. Lys22 provides a ligand contact to phosphoenolpyruvate. Residues Gly95 and Arg123 each coordinate phosphoenolpyruvate. 6 residues coordinate 3-phosphoshikimate: Ser170, Ser171, Gln172, Ser197, Asp316, and Lys343. Phosphoenolpyruvate is bound at residue Gln172. Asp316 acts as the Proton acceptor in catalysis. The phosphoenolpyruvate site is built by Arg347, Arg390, and Lys414.

It belongs to the EPSP synthase family. Monomer.

Its subcellular location is the cytoplasm. It carries out the reaction 3-phosphoshikimate + phosphoenolpyruvate = 5-O-(1-carboxyvinyl)-3-phosphoshikimate + phosphate. Its pathway is metabolic intermediate biosynthesis; chorismate biosynthesis; chorismate from D-erythrose 4-phosphate and phosphoenolpyruvate: step 6/7. In terms of biological role, catalyzes the transfer of the enolpyruvyl moiety of phosphoenolpyruvate (PEP) to the 5-hydroxyl of shikimate-3-phosphate (S3P) to produce enolpyruvyl shikimate-3-phosphate and inorganic phosphate. This Laribacter hongkongensis (strain HLHK9) protein is 3-phosphoshikimate 1-carboxyvinyltransferase.